A 766-amino-acid polypeptide reads, in one-letter code: Probable beta-glucosidase K (766 aa).

Asn19 carries N-linked (GlcNAc...) asparagine glycosylation. Residue Asp196 is part of the active site. 3 N-linked (GlcNAc...) asparagine glycosylation sites follow: Asn288, Asn453, and Asn748. A PA14 domain is found at 369–528 (EGQPGLGMRF…DPERAIARAV (160 aa)). Residues 726 to 766 (LGRRGRSGSSPAVYRGRSNNVVNRTSHQGAQRISKGGFAAR) form a disordered region. Residues 742-756 (RSNNVVNRTSHQGAQ) are compositionally biased toward polar residues.

This sequence belongs to the glycosyl hydrolase 3 family.

The protein resides in the secreted. The enzyme catalyses Hydrolysis of terminal, non-reducing beta-D-glucosyl residues with release of beta-D-glucose.. It participates in glycan metabolism; cellulose degradation. Functionally, beta-glucosidases are one of a number of cellulolytic enzymes involved in the degradation of cellulosic biomass. Catalyzes the last step releasing glucose from the inhibitory cellobiose. This chain is Probable beta-glucosidase K (bglK), found in Aspergillus fumigatus (strain CBS 144.89 / FGSC A1163 / CEA10) (Neosartorya fumigata).